Reading from the N-terminus, the 118-residue chain is Myotrophin (118 aa).

ANK repeat units follow at residues 1–30, 34–65, and 67–98; these read MGDK…DVNR, GGRK…NAPD, and HGIT…NRKG.

This sequence belongs to the myotrophin family.

The protein localises to the cytoplasm. It localises to the nucleus. It is found in the perinuclear region. Functionally, regulates NF-kappa-B transcription factor activity. Promotes growth of cardiomyocytes, but not cardiomyocyte proliferation. Promotes cardiac muscle hypertrophy. Plays a role in the regulation of the growth of actin filaments. Inhibits the activity of the F-actin-capping protein complex. The sequence is that of Myotrophin (mtpn) from Danio rerio (Zebrafish).